The chain runs to 325 residues: 6-hydroxymellein 5-farnesyltransferase cdmH (325 aa).

The next 5 membrane-spanning stretches (helical) occupy residues A60–G80, A113–G133, W138–I158, L169–C189, and I192–Y212. The N-linked (GlcNAc...) asparagine glycan is linked to N214. The next 3 helical transmembrane spans lie at A243–F263, W267–F287, and G295–L315.

This sequence belongs to the UbiA prenyltransferase family. It depends on Mg(2+) as a cofactor.

The protein localises to the membrane. It catalyses the reaction 6-hydroxymellein + (2E,6E)-farnesyl diphosphate = verruculide C + diphosphate. It functions in the pathway secondary metabolite biosynthesis; terpenoid biosynthesis. Functionally, 6-hydroxymellein 5-farnesyltransferase; part of the gene cluster that mediates the biosynthesis of chrodrimanin B, a meroterpenoid that acts as a potent blocker of insect GABA-gated chloride channels. The first step of the pathway is the biosynthesis of 6-hydroxymellein by the polyketide synthase cdmE. The prenyltransferase cdmH acts as a 6-hydroxymellein 5-farnesyltransferase and produces the hydrophobic metabolite verruculide C. The FAD-dependent monooxygenase cdmI further converts verruculide C into verruculide B. The terpene cyclase cdmG then produced the pentacyclic molecule 3-hydroxypentacecilide A, the backbone structure of chrodrimanin B, via folding the farnesyl moiety of the substrate into the chair-boat conformation. The short-chain dehydrogenase/reductase cdmF functions as the 3-OH dehydrogenase that oxidizes the C-3 hydroxyl group of 3-hydroxypentacecilide A and produces chrodrimanin C, the dehydrogenated product of 3-hydroxypentacecilide A. The cytochrome P450 monooxygenase cdmJ then accepts both 3-hydroxypentacecilide A and chrodrimanin C and functions as a C-7-beta-hydroxylase to produce respectively chrodrimanin H and chrodrimanin F. The dioxygenase cdmA accepts chrodrimanin H to afford chrodrimanin E, which is further transformed to chrodrimanin A by the dioxygenase cdmD. CdmA can also accept chrodrimanin C as substrate to convert it into verruculide A, which is further converted into chrodrimanin T by cdmD. The last step of the biosynthesis is proposed to be performed by the acetyltransferase cdmC which acetylates chrodrimanin A to yield chrodrimanin B. The pathway may also lead to the production of additional shunt products, including chrodrimanins T and U. The protein is 6-hydroxymellein 5-farnesyltransferase cdmH of Talaromyces verruculosus (Penicillium verruculosum).